The following is an 86-amino-acid chain: Large ribosomal subunit protein uL23 (86 aa).

The protein belongs to the universal ribosomal protein uL23 family. In terms of assembly, part of the 50S ribosomal subunit. Contacts protein L29.

In terms of biological role, binds to 23S rRNA. One of the proteins that surrounds the polypeptide exit tunnel on the outside of the ribosome. This Aeropyrum pernix (strain ATCC 700893 / DSM 11879 / JCM 9820 / NBRC 100138 / K1) protein is Large ribosomal subunit protein uL23.